Here is a 70-residue protein sequence, read N- to C-terminus: Protein SlyX homolog (70 aa).

Residues 51–70 are disordered; that stretch reads RMREAEANRPGPTNEPPPHY.

The protein belongs to the SlyX family.

The polypeptide is Protein SlyX homolog (Nitrobacter hamburgensis (strain DSM 10229 / NCIMB 13809 / X14)).